Here is a 457-residue protein sequence, read N- to C-terminus: Transmembrane protease serine 5 (457 aa).

The disordered stretch occupies residues methionine 1–glycine 21. The Cytoplasmic portion of the chain corresponds to methionine 1–cysteine 49. The chain crosses the membrane as a helical; Signal-anchor for type II membrane protein span at residues alanine 50–leucine 70. The Extracellular portion of the chain corresponds to tyrosine 71–leucine 457. The region spanning phenylalanine 112–serine 207 is the SRCR domain. Cystine bridges form between cysteine 135/cysteine 196, cysteine 148/cysteine 206, cysteine 209/cysteine 328, cysteine 243/cysteine 259, cysteine 342/cysteine 411, cysteine 374/cysteine 390, and cysteine 401/cysteine 429. N-linked (GlcNAc...) asparagine glycosylation is found at asparagine 163, asparagine 170, and asparagine 195. In terms of domain architecture, Peptidase S1 spans isoleucine 218–glutamine 453. Residues histidine 258 and aspartate 308 each act as charge relay system in the active site. Residues asparagine 319 and asparagine 375 are each glycosylated (N-linked (GlcNAc...) asparagine). Serine 405 (charge relay system) is an active-site residue.

It belongs to the peptidase S1 family. As to expression, brain-specific. Predominantly expressed in neurons, in their axons, and at the synapses of motoneurons in the spinal cord.

Its subcellular location is the cell membrane. Functionally, may play a role in hearing. This chain is Transmembrane protease serine 5 (TMPRSS5), found in Homo sapiens (Human).